We begin with the raw amino-acid sequence, 135 residues long: MSKEFSRTQRVSQQLQKELAVMLQREVRDSRIGMVTISDVEVSRDLAYAKVFVTFFCVGEQTPESSLAALKEHEPSLRMMLGKRIRLRLTPEIRFTYDNTLVEGMRMSNLVTDVVNTDKRKMAESGRTESDEGEE.

Belongs to the RbfA family. Monomer. Binds 30S ribosomal subunits, but not 50S ribosomal subunits or 70S ribosomes.

It is found in the cytoplasm. Functionally, one of several proteins that assist in the late maturation steps of the functional core of the 30S ribosomal subunit. Associates with free 30S ribosomal subunits (but not with 30S subunits that are part of 70S ribosomes or polysomes). Required for efficient processing of 16S rRNA. May interact with the 5'-terminal helix region of 16S rRNA. This Aliivibrio fischeri (strain ATCC 700601 / ES114) (Vibrio fischeri) protein is Ribosome-binding factor A.